A 433-amino-acid polypeptide reads, in one-letter code: MVSTSSFQTTKSEEIFAAAQKLMPGGVSSPVRAFKSVGGQPIVFDRVKGAYIWDVDGNQYIDYVGTWGPAICGHAHPDVIAALHEALEKGTSFGAPSVQENILAEMVIEAVPSIEMVRFVNSGTEACMSVLRLMRAFTGREKIIKFEGCYHGHADMFLVKAGSGVATLGLPDSPGVPKATTSFTLTAPYNDLEAVKALFAENPDDIAGVILEPVVGNSGFVLPDAGFLEGLRELTKEYGALLMFDEVMTGFRLAYGGAQEKFGVTPDLTTLGKVIGGGLPVGAYGGRQDIMEMVAPSGPMYQAGTLSGNPLAMTAGIKTLELLQKPGTYDYLNDITQKLADGLLKLAQDAGHAVCGGHIGAMFGLFLTAGPVHNYEDAKKSDLVKFGRFHRAMLERGVYLAPSQFEAGFTSLAHTQADIDRTLAMAKEVFSHL.

Position 273 is an N6-(pyridoxal phosphate)lysine (K273).

This sequence belongs to the class-III pyridoxal-phosphate-dependent aminotransferase family. HemL subfamily. In terms of assembly, homodimer. Pyridoxal 5'-phosphate serves as cofactor.

The protein resides in the cytoplasm. It carries out the reaction (S)-4-amino-5-oxopentanoate = 5-aminolevulinate. It participates in porphyrin-containing compound metabolism; protoporphyrin-IX biosynthesis; 5-aminolevulinate from L-glutamyl-tRNA(Glu): step 2/2. It functions in the pathway porphyrin-containing compound metabolism; chlorophyll biosynthesis. The protein is Glutamate-1-semialdehyde 2,1-aminomutase of Rippkaea orientalis (strain PCC 8801 / RF-1) (Cyanothece sp. (strain PCC 8801)).